A 177-amino-acid polypeptide reads, in one-letter code: MPIKSRIRSIPDYPKKGIMFRDITTLIKDPVGFRLVIDHLTQHYLEAGMDFDVIVGIEARGFIIGGALSYTLGKGFVPVRKPGKLPADVVSQEYELEYGSDKIEIHTDALVEGQRVLLVDDLLATGGTALAAAALVEKVGGIVAEMAFIVNLPDVGGERKLLEKGYNVYSLTDFEGD.

Belongs to the purine/pyrimidine phosphoribosyltransferase family. Homodimer.

It is found in the cytoplasm. The enzyme catalyses AMP + diphosphate = 5-phospho-alpha-D-ribose 1-diphosphate + adenine. Its pathway is purine metabolism; AMP biosynthesis via salvage pathway; AMP from adenine: step 1/1. In terms of biological role, catalyzes a salvage reaction resulting in the formation of AMP, that is energically less costly than de novo synthesis. The chain is Adenine phosphoribosyltransferase from Chlorobium chlorochromatii (strain CaD3).